A 355-amino-acid chain; its full sequence is 3,4-dihydroxy-2-butanone 4-phosphate synthase (355 aa).

Residues 1–202 (MYHKRIKEAI…VSDIIQYRLN (202 aa)) are DHBP synthase. D-ribulose 5-phosphate contacts are provided by residues 27–28 (RE), Asp-32, 139–143 (RTGHT), and Glu-163. Glu-28 contributes to the Mg(2+) binding site. His-142 lines the Mg(2+) pocket. The interval 203–355 (FENLLREITR…NLHLVEKIEV (153 aa)) is GTP cyclohydrolase II-like.

In the N-terminal section; belongs to the DHBP synthase family. This sequence in the C-terminal section; belongs to the GTP cyclohydrolase II family. Requires Mg(2+) as cofactor. The cofactor is Mn(2+).

The enzyme catalyses D-ribulose 5-phosphate = (2S)-2-hydroxy-3-oxobutyl phosphate + formate + H(+). It functions in the pathway cofactor biosynthesis; riboflavin biosynthesis; 2-hydroxy-3-oxobutyl phosphate from D-ribulose 5-phosphate: step 1/1. Catalyzes the conversion of D-ribulose 5-phosphate to formate and 3,4-dihydroxy-2-butanone 4-phosphate. This Helicobacter hepaticus (strain ATCC 51449 / 3B1) protein is 3,4-dihydroxy-2-butanone 4-phosphate synthase (ribB).